The primary structure comprises 273 residues: MLRIDKLTKRFGDNIAVNAATLDVDKPCMIGIIGRSGAGKSTLLRMINRLSDATDGRILFEDRDVTRLRGAEKRAWQAQCAMIFQQFNLVPRMDVVSNVLHGTLNRRSTLATMFNLYPTEDIHRAIDILDRLGIAAHAAKRAEALSGGQQQRVAIARALMQDPAIILADEPIASLDPMNAQVVMQALRRIHEEDGRTVIANLHTLDTARRYCDRVVGMRDGRIVFDGLPEQLTTGVAREIYGADASFSEAATSTEIDTLDAALPARQRAGATA.

The 244-residue stretch at 2 to 245 (LRIDKLTKRF…VAREIYGADA (244 aa)) folds into the ABC transporter domain. 34 to 41 (GRSGAGKS) lines the ATP pocket.

Belongs to the ABC transporter superfamily. Phosphonates importer (TC 3.A.1.9.1) family. In terms of assembly, the complex is composed of two ATP-binding proteins (PhnC), two transmembrane proteins (PhnE) and a solute-binding protein (PhnD).

It localises to the cell inner membrane. It catalyses the reaction phosphonate(out) + ATP + H2O = phosphonate(in) + ADP + phosphate + H(+). In terms of biological role, part of the ABC transporter complex PhnCDE involved in phosphonates import. Responsible for energy coupling to the transport system. The sequence is that of Phosphonates import ATP-binding protein PhnC from Ruegeria pomeroyi (strain ATCC 700808 / DSM 15171 / DSS-3) (Silicibacter pomeroyi).